A 292-amino-acid polypeptide reads, in one-letter code: tRNA pseudouridine synthase B (292 aa).

The Nucleophile role is filled by D40.

This sequence belongs to the pseudouridine synthase TruB family. Type 1 subfamily.

It carries out the reaction uridine(55) in tRNA = pseudouridine(55) in tRNA. Functionally, responsible for synthesis of pseudouridine from uracil-55 in the psi GC loop of transfer RNAs. The polypeptide is tRNA pseudouridine synthase B (Mycoplasma capricolum subsp. capricolum (strain California kid / ATCC 27343 / NCTC 10154)).